The primary structure comprises 575 residues: Delta-1-pyrroline-5-carboxylate dehydrogenase, mitochondrial (575 aa).

297 to 302 (GKIQSG) is an NAD(+) binding site. Glutamate 317 functions as the Proton acceptor in the catalytic mechanism. Cysteine 351 functions as the Nucleophile in the catalytic mechanism.

Belongs to the aldehyde dehydrogenase family.

Its subcellular location is the mitochondrion inner membrane. The catalysed reaction is L-glutamate 5-semialdehyde + NAD(+) + H2O = L-glutamate + NADH + 2 H(+). The protein operates within amino-acid degradation; L-proline degradation into L-glutamate; L-glutamate from L-proline: step 2/2. The sequence is that of Delta-1-pyrroline-5-carboxylate dehydrogenase, mitochondrial (PUT2) from Saccharomyces cerevisiae (strain ATCC 204508 / S288c) (Baker's yeast).